We begin with the raw amino-acid sequence, 311 residues long: Pyrimidine-specific ribonucleoside hydrolase RihA (311 aa).

Residue H240 is part of the active site.

Belongs to the IUNH family. RihA subfamily.

In terms of biological role, hydrolyzes with equal efficiency cytidine or uridine to ribose and cytosine or uracil, respectively. This is Pyrimidine-specific ribonucleoside hydrolase RihA from Escherichia coli O139:H28 (strain E24377A / ETEC).